Consider the following 510-residue polypeptide: Inositol-3-phosphate synthase (510 aa).

Positions 70, 71, 72, 73, 143, 180, 190, 193, 230, 231, 232, 233, 281, 282, 306, 309, 340, 341, 342, 355, 393, 394, 422, and 423 each coordinate NAD(+).

It belongs to the myo-inositol 1-phosphate synthase family. NAD(+) serves as cofactor.

It localises to the cytoplasm. It is found in the cytosol. The protein localises to the nucleus. The enzyme catalyses D-glucose 6-phosphate = 1D-myo-inositol 3-phosphate. It functions in the pathway polyol metabolism; myo-inositol biosynthesis; myo-inositol from D-glucose 6-phosphate: step 1/2. Key enzyme in myo-inositol biosynthesis pathway that catalyzes the conversion of glucose 6-phosphate to 1-myo-inositol 1-phosphate in a NAD-dependent manner. This is Inositol-3-phosphate synthase (INPS1) from Nicotiana paniculata.